A 1170-amino-acid chain; its full sequence is Integrin alpha-2 (1170 aa).

A signal peptide spans 1–18 (PLQLVLVFSQGILNCCVA). At 19-1121 (YNVGLPKAKI…KPHEKVEVPT (1103 aa)) the chain is on the extracellular side. FG-GAP repeat units follow at residues 23–81 (LPKA…TTTC) and 90–150 (TSMS…LRTS). Cys-72 and Cys-81 are disulfide-bonded. Residues Asn-94, Asn-101, and Asn-332 are each glycosylated (N-linked (GlcNAc...) asparagine). In terms of domain architecture, VWFA spans 177-354 (WDAVKNFLEK…TIGEQIFSIE (178 aa)). 5 FG-GAP repeats span residues 355-409 (GTVQ…LIFS), 412-464 (AFEQ…ENGN), 466-528 (TVIQ…ILNW), 529-587 (HQFL…MIRL), and 591-653 (QKIL…FTPK). N-linked (GlcNAc...) asparagine glycosylation is found at Asn-421, Asn-449, and Asn-464. The Cell attachment site motif lies at 472–474 (RGD). Asp-488, Asn-490, Asp-492, Asp-496, Asp-552, Asn-554, Asp-556, Asp-560, Asp-616, Asn-618, Asp-620, and Asp-624 together coordinate Ca(2+). An intrachain disulfide couples Cys-669 to Cys-726. Asn-688 and Asn-748 each carry an N-linked (GlcNAc...) asparagine glycan. Cystine bridges form between Cys-778-Cys-784 and Cys-854-Cys-865. An N-linked (GlcNAc...) asparagine glycan is attached at Asn-945. Intrachain disulfides connect Cys-1008/Cys-1039 and Cys-1044/Cys-1049. 2 N-linked (GlcNAc...) asparagine glycosylation sites follow: Asn-1063 and Asn-1070. A helical membrane pass occupies residues 1122–1143 (GVIVGSVIAGILLLLALVAILW). Residues 1144–1170 (KLGFFKRKYEKMAKNPDETDETTELNS) lie on the Cytoplasmic side of the membrane. The short motif at 1146-1150 (GFFKR) is the GFFKR motif element.

Belongs to the integrin alpha chain family. As to quaternary structure, heterodimer of an alpha and a beta subunit. Alpha-2 associates with beta-1. Interacts with HPS5 and RAB21.

The protein localises to the membrane. Integrin alpha-2/beta-1 is a receptor for laminin, collagen, collagen C-propeptides, fibronectin and E-cadherin. It recognizes the proline-hydroxylated sequence G-F-P-G-E-R in collagen. It is responsible for adhesion of platelets and other cells to collagens, modulation of collagen and collagenase gene expression, force generation and organization of newly synthesized extracellular matrix. This Bos taurus (Bovine) protein is Integrin alpha-2 (ITGA2).